Consider the following 405-residue polypeptide: Secreted aspartic protease 8 (405 aa).

The N-terminal stretch at 1 to 25 is a signal peptide; it reads MVSIITFTKNVLVTLAFALLAQGLA. Asn-50 is a glycosylation site (N-linked (GlcNAc...) asparagine). A disordered region spans residues 52–78; that stretch reads TAHGQHHQSQQQQQQQQQQPAQKRGTV. Over residues 58–70 the composition is skewed to low complexity; it reads HQSQQQQQQQQQQ. A Peptidase A1 domain is found at 89 to 392; that stretch reads YAATITVGSN…DLDGNTISLA (304 aa). Residue Asp-107 is part of the active site. Residue 107–109 participates in pepstatin A binding; sequence DTG. A disulfide bridge links Cys-122 with Cys-134. Residue Asp-292 is part of the active site. 292 to 296 provides a ligand contact to pepstatin A; sequence DSGTT. Residues Cys-327 and Cys-358 are joined by a disulfide bond.

This sequence belongs to the peptidase A1 family. In terms of assembly, monomer.

Its subcellular location is the secreted. It carries out the reaction Preferential cleavage at the carboxyl of hydrophobic amino acids, but fails to cleave 15-Leu-|-Tyr-16, 16-Tyr-|-Leu-17 and 24-Phe-|-Phe-25 of insulin B chain. Activates trypsinogen, and degrades keratin.. Secreted aspartic peptidases (SAPs) are a group of ten acidic hydrolases considered as key virulence factors. These enzymes supply the fungus with nutrient amino acids as well as are able to degrade the selected host's proteins involved in the immune defense. Moreover, acts toward human hemoglobin though limited proteolysis to generate a variety of antimicrobial hemocidins, enabling to compete with the other microorganisms of the same physiological niche using the microbicidal peptides generated from the host protein. Functionally, plays a key role in defense against host by cleaving histatin-5 (Hst 5), a peptide from human saliva that carries out fungicidal activity. The cleavage rate decreases in an order of SAP2 &gt; SAP9 &gt; SAP3 &gt; SAP7 &gt; SAP4 &gt; SAP1 &gt; SAP8. The hydrolysis of Hst 5 by SAP8 causes production of the DSHAKRHHGY, HHSHRGY and FHEKHHSHRGY peptides. This chain is Secreted aspartic protease 8, found in Candida albicans (Yeast).